Reading from the N-terminus, the 327-residue chain is MSHLADLVERALAAINDAQDVAALDNVRVEYLGKKGHLTLQMTTLRELPAEERPAAGAVINEAKQQVQDALNAQKNALESAVMNARLAQETIDVSLPGRRIENGGLHPVTRTIDRIETFFGELGFSVETGPEIEDDYHNFDALNIPAHHPARADHDTFWFDATRLLRTQTSGVQIRTMKNQQPPIRVIAPGRVYRNDYDQTHTPMFHQMEGLIVDKNISFTNLKGTLHDFLNNFFEDDMQVRFRPSYFPFTEPSAEVDVMGKNGKWLEVLGCGMVHPNVLSNAGIDPEVYSGFAFGMGMERLTMLRYGVTDLRAFFENDLRFLKQFK.

Glu-252 contributes to the Mg(2+) binding site.

It belongs to the class-II aminoacyl-tRNA synthetase family. Phe-tRNA synthetase alpha subunit type 1 subfamily. Tetramer of two alpha and two beta subunits. Mg(2+) serves as cofactor.

The protein localises to the cytoplasm. The enzyme catalyses tRNA(Phe) + L-phenylalanine + ATP = L-phenylalanyl-tRNA(Phe) + AMP + diphosphate + H(+). The sequence is that of Phenylalanine--tRNA ligase alpha subunit from Erwinia tasmaniensis (strain DSM 17950 / CFBP 7177 / CIP 109463 / NCPPB 4357 / Et1/99).